Here is a 326-residue protein sequence, read N- to C-terminus: ATPase GET3 (326 aa).

An ATP-binding site is contributed by 32–39 (KGGVGKTT). Asp-61 is a catalytic residue. The ATP site is built by Glu-244 and Asn-271. Zn(2+) is bound by residues Cys-282 and Cys-285.

This sequence belongs to the arsA ATPase family. Homodimer.

Its subcellular location is the cytoplasm. It localises to the endoplasmic reticulum. Its function is as follows. ATPase required for the post-translational delivery of tail-anchored (TA) proteins to the endoplasmic reticulum. Recognizes and selectively binds the transmembrane domain of TA proteins in the cytosol. This complex then targets to the endoplasmic reticulum by membrane-bound receptors, where the tail-anchored protein is released for insertion. This process is regulated by ATP binding and hydrolysis. ATP binding drives the homodimer towards the closed dimer state, facilitating recognition of newly synthesized TA membrane proteins. ATP hydrolysis is required for insertion. Subsequently, the homodimer reverts towards the open dimer state, lowering its affinity for the membrane-bound receptor, and returning it to the cytosol to initiate a new round of targeting. The chain is ATPase GET3 from Phaeosphaeria nodorum (strain SN15 / ATCC MYA-4574 / FGSC 10173) (Glume blotch fungus).